The sequence spans 617 residues: Electron transfer flavoprotein-ubiquinone oxidoreductase, mitochondrial (617 aa).

The N-terminal 33 residues, 1–33 (MQVLLARLACPVYQCFHAIKIKKNYLPLCATRW), are a transit peptide targeting the mitochondrion. 71 to 85 (VVIVGAGPAGLSAAA) is a binding site for FAD. Lysine 96 carries the N6-acetyllysine modification. The stretch at 109–130 (IGAHTLSGACLDPRALQELFPD) is an intramembrane region. N6-acetyllysine occurs at positions 132 and 223. 2 residues coordinate a ubiquinone: glycine 305 and glycine 306. Lysine 357 carries the post-translational modification N6-acetyllysine. Residues 428–447 (IGLDVTEYEDNLKKSWVWKE) lie within the membrane without spanning it. Phosphoserine is present on serine 551. The [4Fe-4S] cluster site is built by cysteine 561, cysteine 586, cysteine 589, and cysteine 592. In terms of domain architecture, 4Fe-4S ferredoxin-type spans 577–606 (FRLQINAQNCVHCKTCDIKDPSQNINWVVP).

The protein belongs to the ETF-QO/FixC family. Monomer. The cofactor is [4Fe-4S] cluster. It depends on FAD as a cofactor.

The protein resides in the mitochondrion inner membrane. It catalyses the reaction a ubiquinone + reduced [electron-transfer flavoprotein] = a ubiquinol + oxidized [electron-transfer flavoprotein] + H(+). Accepts electrons from ETF and reduces ubiquinone. The protein is Electron transfer flavoprotein-ubiquinone oxidoreductase, mitochondrial (ETFDH) of Bos taurus (Bovine).